A 294-amino-acid chain; its full sequence is 33 kDa chaperonin (294 aa).

2 disulfide bridges follow: Cys231–Cys233 and Cys264–Cys267.

It belongs to the HSP33 family. In terms of processing, under oxidizing conditions two disulfide bonds are formed involving the reactive cysteines. Under reducing conditions zinc is bound to the reactive cysteines and the protein is inactive.

The protein localises to the cytoplasm. Functionally, redox regulated molecular chaperone. Protects both thermally unfolding and oxidatively damaged proteins from irreversible aggregation. Plays an important role in the bacterial defense system toward oxidative stress. The chain is 33 kDa chaperonin from Aeromonas salmonicida (strain A449).